Consider the following 269-residue polypeptide: 3-methyl-2-oxobutanoate hydroxymethyltransferase (269 aa).

Mg(2+)-binding residues include D43 and D82. Residues 43 to 44 (DS), D82, and K110 contribute to the 3-methyl-2-oxobutanoate site. Residue E112 coordinates Mg(2+). E179 acts as the Proton acceptor in catalysis.

Belongs to the PanB family. Homodecamer; pentamer of dimers. The cofactor is Mg(2+).

The protein localises to the cytoplasm. The catalysed reaction is 3-methyl-2-oxobutanoate + (6R)-5,10-methylene-5,6,7,8-tetrahydrofolate + H2O = 2-dehydropantoate + (6S)-5,6,7,8-tetrahydrofolate. It participates in cofactor biosynthesis; (R)-pantothenate biosynthesis; (R)-pantoate from 3-methyl-2-oxobutanoate: step 1/2. Functionally, catalyzes the reversible reaction in which hydroxymethyl group from 5,10-methylenetetrahydrofolate is transferred onto alpha-ketoisovalerate to form ketopantoate. This chain is 3-methyl-2-oxobutanoate hydroxymethyltransferase, found in Acinetobacter baumannii (strain SDF).